We begin with the raw amino-acid sequence, 455 residues long: Ribulose bisphosphate carboxylase large chain (455 aa).

Lysine 5 carries the N6,N6,N6-trimethyllysine modification. Residues asparagine 114 and threonine 164 each contribute to the substrate site. Lysine 166 functions as the Proton acceptor in the catalytic mechanism. Position 168 (lysine 168) interacts with substrate. Residues lysine 192, aspartate 194, and glutamate 195 each contribute to the Mg(2+) site. At lysine 192 the chain carries N6-carboxylysine. Histidine 285 (proton acceptor) is an active-site residue. Arginine 286, histidine 318, and serine 370 together coordinate substrate.

The protein belongs to the RuBisCO large chain family. Type I subfamily. As to quaternary structure, heterohexadecamer of 8 large chains and 8 small chains; disulfide-linked. The disulfide link is formed within the large subunit homodimers. Mg(2+) serves as cofactor. In terms of processing, the disulfide bond which can form in the large chain dimeric partners within the hexadecamer appears to be associated with oxidative stress and protein turnover.

The protein localises to the plastid. It localises to the chloroplast. The catalysed reaction is 2 (2R)-3-phosphoglycerate + 2 H(+) = D-ribulose 1,5-bisphosphate + CO2 + H2O. It carries out the reaction D-ribulose 1,5-bisphosphate + O2 = 2-phosphoglycolate + (2R)-3-phosphoglycerate + 2 H(+). In terms of biological role, ruBisCO catalyzes two reactions: the carboxylation of D-ribulose 1,5-bisphosphate, the primary event in carbon dioxide fixation, as well as the oxidative fragmentation of the pentose substrate in the photorespiration process. Both reactions occur simultaneously and in competition at the same active site. This chain is Ribulose bisphosphate carboxylase large chain, found in Lupinus paraguariensis (Lupine).